The sequence spans 261 residues: MIIADNIKQFHSIRNSLIKQQKIGFVPTMGALHNGHISLIKKAKSENDVVIVSIFVNPTQFNNPNDYQTYPNQLQQDIQILASLDVDVLFNPSEKDIYPDGNLLRIEPKLEIANILEGKSRPGHFSGMLTVVLKLLQITKPNNLYLGEKDYQQVMLIKQLVKDFFINTKIIVCPTQRQPSGLPLSSRNKNLTSTDIEIANKIYEILRQDDFSNLEELTNKINSTGAKLQYIQKLNNRIFLAFYIGKVRLIDNFLKETGPSC.

ATP is bound at residue Met29 to His36. Catalysis depends on His36, which acts as the Proton donor. (R)-pantoate is bound at residue Gln60. Gln60 serves as a coordination point for beta-alanine. Gly147 to Asp150 is an ATP binding site. (R)-pantoate is bound at residue Gln153. Leu184–Arg187 contacts ATP.

The protein belongs to the pantothenate synthetase family. As to quaternary structure, homodimer.

It localises to the cytoplasm. The enzyme catalyses (R)-pantoate + beta-alanine + ATP = (R)-pantothenate + AMP + diphosphate + H(+). Its pathway is cofactor biosynthesis; (R)-pantothenate biosynthesis; (R)-pantothenate from (R)-pantoate and beta-alanine: step 1/1. Catalyzes the condensation of pantoate with beta-alanine in an ATP-dependent reaction via a pantoyl-adenylate intermediate. This is Pantothenate synthetase from Francisella tularensis subsp. tularensis (strain FSC 198).